The chain runs to 698 residues: MFKLFTARQHDKIWDFDGGIHPPEMKLQSSTVPMRIAPLPDQLIIPLQQHLGPEGELRVRAGEQVLKGQPLTVGRGRTVPVHAPTSGMITAIAPHTTAHPSGLAELCVHITPDGEDRWREQQPWADYRQRDKMALLDRIHQAGIAGLGGAGFPTASKLQGGLNGIITLIINAAECEPYITADDRLMQEHADEVITGIHILRHLLQPQQVLIGIEDNKPEAIAALQRALRGQDGIHLRVVPTKYPSGGAKQLTKILTGKEVPFGKHSSSIGVLMQNVGTVVAIKRAVIDDEPLIERVVTLTGDALSSPGNFWARIGTPVLYLLKLAGFKPQNPPMVIMGGPLMGFTLPSLDVPIVKISNCILAPAETEMGLSEPEQSCIRCGLCVDACPAGLLPQQLYWFSRGEEHEKARNHNLFDCIECGACAYVCPSNIPLVQYYRQEKAEIRALDQESARAAEAKARFEAKQARLAREKLARELRHKQAAVKLTDADQQTVDAAVSRLTRQSDGSESVINIPAGQLPDNSAVIAAREARKAQARARQAEKQQARSTEETTDVVDPRQAAVAAAIARVKAKKAAQVQHVTTDVAEAGSEAIAEDPRKAAVAAAIARVKAKKAVQAQHVTTDVAEAGSEAMAEDPRKAAVAAAIARVKAKKAAQAQHVTTDVAEAGSEAMAEDPRKAAVAAAIARVKAKKAAQAINPD.

2 consecutive 4Fe-4S ferredoxin-type domains span residues 366-397 and 407-436; these read TEMG…QQLY and KARN…VQYY. [4Fe-4S] cluster is bound by residues cysteine 377, cysteine 380, cysteine 383, cysteine 387, cysteine 416, cysteine 419, cysteine 422, and cysteine 426.

This sequence belongs to the 4Fe4S bacterial-type ferredoxin family. RnfC subfamily. As to quaternary structure, the complex is composed of six subunits: RnfA, RnfB, RnfC, RnfD, RnfE and RnfG. [4Fe-4S] cluster is required as a cofactor.

Its subcellular location is the cell inner membrane. Its function is as follows. Part of a membrane-bound complex that couples electron transfer with translocation of ions across the membrane. This chain is Ion-translocating oxidoreductase complex subunit C, found in Yersinia pseudotuberculosis serotype O:3 (strain YPIII).